We begin with the raw amino-acid sequence, 2492 residues long: Talin-A (2492 aa).

The FERM domain occupies 84–365 (RPQKFKLLDG…GYIEIIMKAR (282 aa)). An I/LWEQ domain is found at 2250 to 2492 (EEDNVLEDLE…NSRKQNYNKN (243 aa)).

The protein localises to the cytoplasm. Its subcellular location is the cytoskeleton. The protein resides in the cell cortex. Actin-binding protein that may be involved in the control of cell motility and chemotaxis. The chain is Talin-A (talA) from Dictyostelium discoideum (Social amoeba).